Here is a 172-residue protein sequence, read N- to C-terminus: Single-stranded DNA-binding protein 2 (172 aa).

Residues 6 to 111 (VNKVILVGHI…VIVNVGGTMQ (106 aa)) form the SSB domain. The DNA-binding element occupies 55 to 61 (WHRVVVF). The interval 113-172 (LGRHNSQPQQEPQTPPTAAKGEGKAVKGAGNAAKGKNAAAPQQPPAQPDPAYDFDDDIPF) is disordered. Positions 119 to 153 (QPQQEPQTPPTAAKGEGKAVKGAGNAAKGKNAAAP) are enriched in low complexity. Residues 167–172 (DDDIPF) carry the Important for interaction with partner proteins motif.

In terms of assembly, homotetramer.

Plays an important role in DNA replication, recombination and repair. Binds to ssDNA and to an array of partner proteins to recruit them to their sites of action during DNA metabolism. The chain is Single-stranded DNA-binding protein 2 (ssb2) from Salmonella typhimurium (strain LT2 / SGSC1412 / ATCC 700720).